Consider the following 319-residue polypeptide: MNTNKIGVLLANLGTPDEPTTPAVKRYLKQFLSDPRVIDLPKFKWQFILNYMILPKRSPKVAKLYREIWTEQGSPLLAISRQQQQALQDYFNRQNQNVLVELGMSYGNPSIESATDRLIKAGVSKIIVLPLYPQYSSTTTASVLDAFARGLTQQRNIVPFEFIHSYHNDPLYIQALANTIQLAEDEKLLFSFHGIPKRYQTEGDFYPEHCQQTAQLVADKLSLTDEQWLVTYQSRFGDEEWLQPYTDETLETLPSQGVKKIAVICAGFSADCLETLEEIAEENKENFLNAGGQSYRYIPALNANTDHINALAKLIEAKI.

Histidine 193 and glutamate 274 together coordinate Fe cation.

It belongs to the ferrochelatase family.

Its subcellular location is the cytoplasm. The catalysed reaction is heme b + 2 H(+) = protoporphyrin IX + Fe(2+). It functions in the pathway porphyrin-containing compound metabolism; protoheme biosynthesis; protoheme from protoporphyrin-IX: step 1/1. Its function is as follows. Catalyzes the ferrous insertion into protoporphyrin IX. The polypeptide is Ferrochelatase (Actinobacillus pleuropneumoniae serotype 7 (strain AP76)).